Reading from the N-terminus, the 226-residue chain is MLTWLQRNTLDFPPLEKAMREPNGLLAAGGDLSADRLIQAYRHGCFPWFSEGQPILWWSPDPRTVLFPDELHVSRSLGKLLRKQHYQVTFDRDFAAVISACAAPRAYADGTWISEAMQRAYLQLHQRGYAHSVEVWDQGVLVGGLYGLAMGQLFFGESMFSRADNASKFGFATLVERLKAWGFVLIDCQMPTEHLHSLGARSISRPEFANYLKHHLDLPSRAIWVS.

It belongs to the L/F-transferase family.

The protein localises to the cytoplasm. It carries out the reaction N-terminal L-lysyl-[protein] + L-leucyl-tRNA(Leu) = N-terminal L-leucyl-L-lysyl-[protein] + tRNA(Leu) + H(+). The catalysed reaction is N-terminal L-arginyl-[protein] + L-leucyl-tRNA(Leu) = N-terminal L-leucyl-L-arginyl-[protein] + tRNA(Leu) + H(+). It catalyses the reaction L-phenylalanyl-tRNA(Phe) + an N-terminal L-alpha-aminoacyl-[protein] = an N-terminal L-phenylalanyl-L-alpha-aminoacyl-[protein] + tRNA(Phe). Its function is as follows. Functions in the N-end rule pathway of protein degradation where it conjugates Leu, Phe and, less efficiently, Met from aminoacyl-tRNAs to the N-termini of proteins containing an N-terminal arginine or lysine. This chain is Leucyl/phenylalanyl-tRNA--protein transferase, found in Pseudomonas fluorescens (strain ATCC BAA-477 / NRRL B-23932 / Pf-5).